Here is a 318-residue protein sequence, read N- to C-terminus: Ankyrin repeat and SOCS box protein 7 (318 aa).

ANK repeat units follow at residues 13–42, 46–75, 80–109, 116–145, 149–178, 180–208, and 213–242; these read QEES…SPNG, NGWT…DPTV, GGFT…RSDI, DGWT…EVDP, KGTT…NIDI, NGFL…DTNL, and DGQT…DTNT. Residues 265–318 form the SOCS box domain; it reads LDFLQEVTRQPRNLQDLCRIKIRQCIGLQNLKLLDELPIAKVMKDYLKHKSDDI.

It belongs to the ankyrin SOCS box (ASB) family. In terms of assembly, interacts with CUL5. Interacts with RNF7. Interacts with PSRC1.

It functions in the pathway protein modification; protein ubiquitination. In terms of biological role, probable substrate-recognition component of a SCF-like ECS (Elongin-Cullin-SOCS-box protein) E3 ubiquitin-protein ligase complex which mediates the ubiquitination and subsequent proteasomal degradation of target proteins. Plays a role in spindle dynamics and genome integrity by targeting the mitotic progression protein PSRC1 for proteasomal degradation in a cell cycle-dependent manner. Also participates in meiosis by mediating the proper attachment between kinetochores and microtubules. The protein is Ankyrin repeat and SOCS box protein 7 (ASB7) of Pongo abelii (Sumatran orangutan).